The primary structure comprises 549 residues: Glucose-6-phosphate isomerase (549 aa).

Catalysis depends on E355, which acts as the Proton donor. Active-site residues include H387 and K515.

This sequence belongs to the GPI family.

It is found in the cytoplasm. It catalyses the reaction alpha-D-glucose 6-phosphate = beta-D-fructose 6-phosphate. The protein operates within carbohydrate biosynthesis; gluconeogenesis. It participates in carbohydrate degradation; glycolysis; D-glyceraldehyde 3-phosphate and glycerone phosphate from D-glucose: step 2/4. Its function is as follows. Catalyzes the reversible isomerization of glucose-6-phosphate to fructose-6-phosphate. The protein is Glucose-6-phosphate isomerase of Pasteurella multocida (strain Pm70).